Consider the following 552-residue polypeptide: 5'-AMP-activated protein kinase catalytic subunit alpha-2 (552 aa).

The 253-residue stretch at 16 to 268 (YVLGDTLGVG…IKDIREHEWF (253 aa)) folds into the Protein kinase domain. Residues 22–30 (LGVGTFGKV) and Lys-45 contribute to the ATP site. Residue Asp-139 is the Proton acceptor of the active site. Thr-172 is modified (phosphothreonine; by LKB1 and CaMKK2). Phosphothreonine is present on Thr-258. The AIS stretch occupies residues 291–376 (EAVKEVCEKF…PERMPPLIAD (86 aa)). Phosphoserine is present on residues Ser-377 and Ser-491.

It belongs to the protein kinase superfamily. CAMK Ser/Thr protein kinase family. SNF1 subfamily. AMPK is a heterotrimer of an alpha catalytic subunit (PRKAA1 or PRKAA2), a beta (PRKAB1 or PRKAB2) and a gamma non-catalytic subunits (PRKAG1, PRKAG2 or PRKAG3). Interacts with FNIP1 and FNIP2. Interacts with DUSP29. Interacts with ARF6. The phosphorylated form at Thr-172 mediated by CamKK2 interacts with ACSS2. Requires Mg(2+) as cofactor. Post-translationally, ubiquitinated. Phosphorylated at Thr-172 by STK11/LKB1 in complex with STE20-related adapter-alpha (STRADA) pseudo kinase and CAB39. Also phosphorylated at Thr-172 by CAMKK2; triggered by a rise in intracellular calcium ions, without detectable changes in the AMP/ATP ratio. CAMKK1 can also phosphorylate Thr-172, but at much lower level. Dephosphorylated by protein phosphatase 2A and 2C (PP2A and PP2C). Phosphorylated by ULK1; leading to negatively regulate AMPK activity and suggesting the existence of a regulatory feedback loop between ULK1 and AMPK. Dephosphorylated by PPM1A and PPM1B at Thr-172 (mediated by STK11/LKB1).

It is found in the cytoplasm. Its subcellular location is the nucleus. It catalyses the reaction L-seryl-[protein] + ATP = O-phospho-L-seryl-[protein] + ADP + H(+). The catalysed reaction is L-threonyl-[protein] + ATP = O-phospho-L-threonyl-[protein] + ADP + H(+). The enzyme catalyses L-seryl-[acetyl-CoA carboxylase] + ATP = O-phospho-L-seryl-[acetyl-CoA carboxylase] + ADP + H(+). It carries out the reaction L-seryl-[3-hydroxy-3-methylglutaryl-coenzyme A reductase] + ATP = O-phospho-L-seryl-[3-hydroxy-3-methylglutaryl-coenzyme A reductase] + ADP + H(+). With respect to regulation, activated by phosphorylation on Thr-172. Binding of AMP to non-catalytic gamma subunit (PRKAG1, PRKAG2 or PRKAG3) results in allosteric activation, inducing phosphorylation on Thr-172. AMP-binding to gamma subunit also sustains activity by preventing dephosphorylation of Thr-172. ADP also stimulates Thr-172 phosphorylation, without stimulating already phosphorylated AMPK. ATP promotes dephosphorylation of Thr-172, rendering the enzyme inactive. Under physiological conditions AMPK mainly exists in its inactive form in complex with ATP, which is much more abundant than AMP. Selectively inhibited by compound C (6-[4-(2-Piperidin-1-yl-ethoxy)-phenyl)]-3-pyridin-4-yl-pyyrazolo[1,5-a] pyrimidine. Activated by resveratrol, a natural polyphenol present in red wine, and S17834, a synthetic polyphenol. Salicylate/aspirin directly activates kinase activity, primarily by inhibiting Thr-172 dephosphorylation. In terms of biological role, catalytic subunit of AMP-activated protein kinase (AMPK), an energy sensor protein kinase that plays a key role in regulating cellular energy metabolism. In response to reduction of intracellular ATP levels, AMPK activates energy-producing pathways and inhibits energy-consuming processes: inhibits protein, carbohydrate and lipid biosynthesis, as well as cell growth and proliferation. AMPK acts via direct phosphorylation of metabolic enzymes, and by longer-term effects via phosphorylation of transcription regulators. Regulates lipid synthesis by phosphorylating and inactivating lipid metabolic enzymes such as ACACA, ACACB, GYS1, HMGCR and LIPE; regulates fatty acid and cholesterol synthesis by phosphorylating acetyl-CoA carboxylase (ACACA and ACACB) and hormone-sensitive lipase (LIPE) enzymes, respectively. Promotes lipolysis of lipid droplets by mediating phosphorylation of isoform 1 of CHKA (CHKalpha2). Regulates insulin-signaling and glycolysis by phosphorylating IRS1, PFKFB2 and PFKFB3. Involved in insulin receptor/INSR internalization. AMPK stimulates glucose uptake in muscle by increasing the translocation of the glucose transporter SLC2A4/GLUT4 to the plasma membrane, possibly by mediating phosphorylation of TBC1D4/AS160. Regulates transcription and chromatin structure by phosphorylating transcription regulators involved in energy metabolism such as CRTC2/TORC2, FOXO3, histone H2B, HDAC5, MEF2C, MLXIPL/ChREBP, EP300, HNF4A, p53/TP53, SREBF1, SREBF2 and PPARGC1A. Acts as a key regulator of glucose homeostasis in liver by phosphorylating CRTC2/TORC2, leading to CRTC2/TORC2 sequestration in the cytoplasm. In response to stress, phosphorylates 'Ser-36' of histone H2B (H2BS36ph), leading to promote transcription. Acts as a key regulator of cell growth and proliferation by phosphorylating FNIP1, TSC2, RPTOR, WDR24 and ATG1/ULK1: in response to nutrient limitation, negatively regulates the mTORC1 complex by phosphorylating RPTOR component of the mTORC1 complex and by phosphorylating and activating TSC2. Also phosphorylates and inhibits GATOR2 subunit WDR24 in response to nutrient limitation, leading to suppress glucose-mediated mTORC1 activation. In response to energetic stress, phosphorylates FNIP1, inactivating the non-canonical mTORC1 signaling, thereby promoting nuclear translocation of TFEB and TFE3, and inducing transcription of lysosomal or autophagy genes. In response to nutrient limitation, promotes autophagy by phosphorylating and activating ATG1/ULK1. In that process, it also activates WDR45/WIPI4. Phosphorylates CASP6, thereby preventing its autoprocessing and subsequent activation. AMPK also acts as a regulator of circadian rhythm by mediating phosphorylation of CRY1, leading to destabilize it. May regulate the Wnt signaling pathway by phosphorylating CTNNB1, leading to stabilize it. Also acts as a regulator of cellular polarity by remodeling the actin cytoskeleton; probably by indirectly activating myosin. Also phosphorylates CFTR, EEF2K, KLC1, NOS3 and SLC12A1. Plays an important role in the differential regulation of pro-autophagy (composed of PIK3C3, BECN1, PIK3R4 and UVRAG or ATG14) and non-autophagy (composed of PIK3C3, BECN1 and PIK3R4) complexes, in response to glucose starvation. Can inhibit the non-autophagy complex by phosphorylating PIK3C3 and can activate the pro-autophagy complex by phosphorylating BECN1. Upon glucose starvation, promotes ARF6 activation in a kinase-independent manner leading to cell migration. Upon glucose deprivation mediates the phosphorylation of ACSS2 at 'Ser-659', which exposes the nuclear localization signal of ACSS2, required for its interaction with KPNA1 and nuclear translocation. Upon stress, regulates mitochondrial fragmentation through phosphorylation of MTFR1L. In Mus musculus (Mouse), this protein is 5'-AMP-activated protein kinase catalytic subunit alpha-2.